Consider the following 412-residue polypeptide: Serine hydroxymethyltransferase (412 aa).

(6S)-5,6,7,8-tetrahydrofolate is bound by residues Leu-112 and 116 to 118; that span reads GHL. At Lys-221 the chain carries N6-(pyridoxal phosphate)lysine. Glu-237 contacts (6S)-5,6,7,8-tetrahydrofolate.

It belongs to the SHMT family. As to quaternary structure, homodimer. It depends on pyridoxal 5'-phosphate as a cofactor.

The protein resides in the cytoplasm. The enzyme catalyses (6R)-5,10-methylene-5,6,7,8-tetrahydrofolate + glycine + H2O = (6S)-5,6,7,8-tetrahydrofolate + L-serine. The protein operates within one-carbon metabolism; tetrahydrofolate interconversion. It functions in the pathway amino-acid biosynthesis; glycine biosynthesis; glycine from L-serine: step 1/1. Catalyzes the reversible interconversion of serine and glycine with tetrahydrofolate (THF) serving as the one-carbon carrier. This reaction serves as the major source of one-carbon groups required for the biosynthesis of purines, thymidylate, methionine, and other important biomolecules. Also exhibits THF-independent aldolase activity toward beta-hydroxyamino acids, producing glycine and aldehydes, via a retro-aldol mechanism. The sequence is that of Serine hydroxymethyltransferase from Malacoplasma penetrans (strain HF-2) (Mycoplasma penetrans).